Reading from the N-terminus, the 429-residue chain is MVPEVRVLSSLLGLALLWFPLDSHARARPDMFCLFHGKRYSPGESWHPYLEPQGLMYCLRCTCSEGAHVSCYRLHCPPVHCPQPVTEPQQCCPKCVEPHTPSGLRAPPKSCQHNGTMYQHGEIFSAHELFPSRLPNQCVLCSCTEGQIYCGLTTCPEPGCPAPLPLPDSCCQACKDEASEQSDEEDSVQSLHGVRHPQDPCSSDAGRKRGPGTPAPTGLSAPLSFIPRHFRPKGAGSTTVKIVLKEKHKKACVHGGKTYSHGEVWHPAFRAFGPLPCILCTCEDGRQDCQRVTCPTEYPCRHPEKVAGKCCKICPEDKADPGHSEISSTRCPKAPGRVLVHTSVSPSPDNLRRFALEHEASDLVEIYLWKLVKGIFHLTQIKKVRKQDFQKEAQHFRLLAGPHEGHWNVFLAQTLELKVTASPDKVTKT.

The signal sequence occupies residues 1 to 25 (MVPEVRVLSSLLGLALLWFPLDSHA). VWFC domains follow at residues 31-96 (MFCL…PKCV) and 109-175 (KSCQ…QACK). Asn114 is a glycosylation site (N-linked (GlcNAc...) asparagine). At Ser182 the chain carries Phosphoserine; by FAM20C. The interval 182 to 224 (SDEEDSVQSLHGVRHPQDPCSSDAGRKRGPGTPAPTGLSAPLS) is disordered. Residues 250–315 (KACVHGGKTY…VAGKCCKICP (66 aa)) form the VWFC 3 domain.

Interacts with GDF5. May interact with BMP2, BMP4, BMP5, BMP6, BMP7 and INHBA. Post-translationally, phosphorylated by FAM20C in the extracellular medium. As to expression, highly expressed in uterus. Moderately expressed in heart, liver, prostate, testis and ovary. Weakly expressed in skeletal muscle, kidney, spleen, small intestine and colon. Expressed in the secretory epithelial cells of uterine endometrium, fallopian tubes, endocervical glands, bladder and prostate, as well as the transitional epithelium of the urinary bladder, and in bone osteoblasts (at protein level). In normal cartilage, expression was confined in a few chondrocytes in the superficial zone as well as in the middle zone. In diseased cartilage coming from osteoarthritic patients, expression was limited to the middle zone of chondrocytes. Isoform 1 and isoform 2 are expressed in fetal cerebellum and heart, while only isoform 2 is detected in fetal spleen. Isoform 2 present in plasma.

The protein resides in the secreted. Its subcellular location is the cytoplasm. May inhibit BMPs activity by blocking their interaction with their receptors. Has a negative regulator effect on the cartilage formation/regeneration from immature mesenchymal cells, by preventing or reducing the rate of matrix accumulation. Implicated in tumor angiogenesis. May play a role during myoblast and osteoblast differentiation, and maturation. The chain is Chordin-like protein 2 (CHRDL2) from Homo sapiens (Human).